The primary structure comprises 91 residues: Small integral membrane protein 13 (91 aa).

A helical transmembrane segment spans residues 10 to 30 (LVFVATLLIVLLLMVCGWYFV). The interval 47 to 91 (DTGSQEGDHEPSGSETEEDTSSSPHRIRSARQRRAPADEGHRPLT) is disordered. 2 positions are modified to phosphoserine: Ser-58 and Ser-60. Thr-62 bears the Phosphothreonine mark. Ser-69 carries the phosphoserine modification. Residues 71–80 (HRIRSARQRR) are compositionally biased toward basic residues. Over residues 81-91 (APADEGHRPLT) the composition is skewed to basic and acidic residues.

Belongs to the SMIM13 family.

The protein localises to the membrane. In Homo sapiens (Human), this protein is Small integral membrane protein 13 (SMIM13).